The sequence spans 628 residues: Exonuclease V, mitochondrial (628 aa).

The transit peptide at 1 to 21 (MSRFWHFKKFYFTSCYSMQRM) directs the protein to the mitochondrion. The segment at 37–58 (TSEHEQVQSISKEESRSLSSND) is disordered. The segment covering 38-52 (SEHEQVQSISKEESR) has biased composition (basic and acidic residues). Residues cysteine 164, cysteine 586, cysteine 589, and cysteine 595 each coordinate [4Fe-4S] cluster.

The protein belongs to the EXO5 family. As to quaternary structure, monomer. The cofactor is Mg(2+). Requires [4Fe-4S] cluster as cofactor.

Its subcellular location is the mitochondrion. In terms of biological role, single strand DNA specific 5' exonuclease involved in mitochondrial DNA replication and recombination. Releases dinucleotides as main products of catalysis. Has the capacity to slide across 5'double-stranded DNA or 5'RNA sequences and resumes cutting two nucleotides downstream of the double-stranded-to-single-stranded junction or RNA-to-DNA junction, respectively. The chain is Exonuclease V, mitochondrial (DEM1) from Candida albicans (strain SC5314 / ATCC MYA-2876) (Yeast).